The chain runs to 289 residues: Acetyl-coenzyme A carboxylase carboxyl transferase subunit beta (289 aa).

In terms of domain architecture, CoA carboxyltransferase N-terminal spans 34 to 289 (MWVKCNKCGE…KLINMHKNSF (256 aa)). Residues Cys-38, Cys-41, Cys-57, and Cys-60 each contribute to the Zn(2+) site. The segment at 38–60 (CNKCGEILYQNDLEKNYMACNLC) adopts a C4-type zinc-finger fold.

The protein belongs to the AccD/PCCB family. In terms of assembly, acetyl-CoA carboxylase is a heterohexamer composed of biotin carboxyl carrier protein (AccB), biotin carboxylase (AccC) and two subunits each of ACCase subunit alpha (AccA) and ACCase subunit beta (AccD). Requires Zn(2+) as cofactor.

The protein localises to the cytoplasm. The enzyme catalyses N(6)-carboxybiotinyl-L-lysyl-[protein] + acetyl-CoA = N(6)-biotinyl-L-lysyl-[protein] + malonyl-CoA. Its pathway is lipid metabolism; malonyl-CoA biosynthesis; malonyl-CoA from acetyl-CoA: step 1/1. Its function is as follows. Component of the acetyl coenzyme A carboxylase (ACC) complex. Biotin carboxylase (BC) catalyzes the carboxylation of biotin on its carrier protein (BCCP) and then the CO(2) group is transferred by the transcarboxylase to acetyl-CoA to form malonyl-CoA. This chain is Acetyl-coenzyme A carboxylase carboxyl transferase subunit beta, found in Clostridium botulinum (strain Loch Maree / Type A3).